The chain runs to 196 residues: MPIGVPKVPFRSPGEGDTSWVDIYNRLYRERLFFLGQEVDTEISNQLISLMIYLSIEKDTKDLYLFINSPGGWVISGMAIYDTMQFVRPDVQTIGMGLAASIASFILVGGAITKRIAFPHARVMIHQPASSFYEAQTGEFILEAEELLKIRETITRVYVQRTGKPIWVVSEDMERDVFMSATEAQAHGIVDLVAVQ.

Ser101 acts as the Nucleophile in catalysis. Residue His126 is part of the active site.

Belongs to the peptidase S14 family. As to quaternary structure, component of the chloroplastic Clp protease core complex.

Its subcellular location is the plastid. It localises to the chloroplast stroma. It catalyses the reaction Hydrolysis of proteins to small peptides in the presence of ATP and magnesium. alpha-casein is the usual test substrate. In the absence of ATP, only oligopeptides shorter than five residues are hydrolyzed (such as succinyl-Leu-Tyr-|-NHMec, and Leu-Tyr-Leu-|-Tyr-Trp, in which cleavage of the -Tyr-|-Leu- and -Tyr-|-Trp bonds also occurs).. Functionally, cleaves peptides in various proteins in a process that requires ATP hydrolysis. Has a chymotrypsin-like activity. Plays a major role in the degradation of misfolded proteins. The chain is ATP-dependent Clp protease proteolytic subunit from Arabis hirsuta (Hairy rock-cress).